Here is a 523-residue protein sequence, read N- to C-terminus: MANIEIRQETPTAFYIKVHDTDNVAIIVNDNGLKAGTRFPDGLELIEHIPQGHKVALLDIPANGEIIRYGEVIGYAVRAIPRGSWIDESMVVLPEAPPLHTLPLATKVPEPLPPLEGYTFEGYRNADGSVGTKNLLGITTSVHCVAGVVDYVVKIIERDLLPKYPNVDGVVGLNHLYGCGVAINAPAAVVPIRTIHNISLNPNFGGEVMVIGLGCEKLQPERLLTGTDDVQAIPVESASIVSLQDEKHVGFQSMVEDILQIAERHLQKLNQRQRETCPASELVVGMQCGGSDAFSGVTANPAVGYASDLLVRCGATVMFSEVTEVRDAIHLLTPRAVNEEVGKRLLEEMEWYDNYLNMGKTDRSANPSPGNKKGGLANVVEKALGSIAKSGKSAIVEVLSPGQRPTKRGLIYAATPASDFVCGTQQVASGITVQVFTTGRGTPYGLMAVPVIKMATRTELANRWFDLMDINAGTIATGEETIEEVGWKLFHFILDVASGKKKTFSDQWGLHNQLAVFNPAPVT.

The protein belongs to the UxaA family. In terms of assembly, homodimer. It depends on Fe(2+) as a cofactor.

The catalysed reaction is galactarate = 5-dehydro-4-deoxy-D-glucarate + H2O. It functions in the pathway carbohydrate acid metabolism; galactarate degradation; D-glycerate from galactarate: step 1/3. Functionally, catalyzes the dehydration of galactarate to form 5-dehydro-4-deoxy-D-glucarate (5-KDG). This is Galactarate dehydratase (L-threo-forming) from Escherichia coli (strain K12).